The primary structure comprises 108 residues: Large ribosomal subunit protein uL24 (108 aa).

The protein belongs to the universal ribosomal protein uL24 family. As to quaternary structure, part of the 50S ribosomal subunit.

Its function is as follows. One of two assembly initiator proteins, it binds directly to the 5'-end of the 23S rRNA, where it nucleates assembly of the 50S subunit. One of the proteins that surrounds the polypeptide exit tunnel on the outside of the subunit. This Trichlorobacter lovleyi (strain ATCC BAA-1151 / DSM 17278 / SZ) (Geobacter lovleyi) protein is Large ribosomal subunit protein uL24.